A 286-amino-acid polypeptide reads, in one-letter code: Bifunctional protein FolD (286 aa).

NADP(+)-binding positions include 165-167, Ser190, and Val231; that span reads GRS.

It belongs to the tetrahydrofolate dehydrogenase/cyclohydrolase family. As to quaternary structure, homodimer.

The catalysed reaction is (6R)-5,10-methylene-5,6,7,8-tetrahydrofolate + NADP(+) = (6R)-5,10-methenyltetrahydrofolate + NADPH. It carries out the reaction (6R)-5,10-methenyltetrahydrofolate + H2O = (6R)-10-formyltetrahydrofolate + H(+). It participates in one-carbon metabolism; tetrahydrofolate interconversion. Functionally, catalyzes the oxidation of 5,10-methylenetetrahydrofolate to 5,10-methenyltetrahydrofolate and then the hydrolysis of 5,10-methenyltetrahydrofolate to 10-formyltetrahydrofolate. The chain is Bifunctional protein FolD from Bacillus cereus (strain G9842).